Here is a 555-residue protein sequence, read N- to C-terminus: Disabled homolog 1 (555 aa).

The tract at residues 1–26 is disordered; it reads MSTETELQVAVKTSAKKDSRKKGQDR. The segment covering 15–26 has biased composition (basic and acidic residues); that stretch reads AKKDSRKKGQDR. The 154-residue stretch at 36–189 folds into the PID domain; it reads KGEGVRYKAK…CEQAVYQTIL (154 aa). Phosphotyrosine occurs at positions 198, 220, and 232. Disordered regions lie at residues 386-409 and 469-555; these read PLAT…PRQK and LTPV…QDGS. Polar residues predominate over residues 391 to 403; that stretch reads PGTNDSARSSPQS. Composition is skewed to low complexity over residues 470 to 479 and 490 to 501; these read TPVTSTTPST and SSPSKSSASHVS. Residue Ser491 is modified to Phosphoserine; by CDK5. Residues 504 to 513 show a composition bias toward acidic residues; it reads TADDIFEEGF.

As to quaternary structure, associates with the SH2 domains of SRC, FYN and ABL. Interacts (phosphorylated on tyrosine residues) with CRK and CRKL (via respective SH2 domain). Interacts with SIAH1, LRP8 and VLDLR. Interacts with LRP1. Interacts with APLP1 (via NPXY motif). Interacts with DAB2IP. Interacts with ZSWIM8. Post-translationally, phosphorylated by FYN on Tyr-198 and Tyr-220 upon reelin induction in embryonic neurons. Also phosphorylated on Ser-491 independently of reelin signaling. In terms of processing, ubiquitinated by various cullin-5-RING E3 ubiquitin-protein ligase complexes (ECS complexes) following ligand-binding and phosphorylation, leading to its degradation. Ubiquitinated by the ECS(SOCS7) complex in the cortical plate of the developing cerebral cortex following ligand-binding and phosphorylation by FYN, leading to its degradation by the proteasome. Recognized by ZSWIM8 through a disorder targets misorder mechanism that eliminates misfolded DAB1 via ubiquitination and proteasomal degradation.

The protein localises to the cytoplasm. In terms of biological role, signaling adapter of the reelin-mediated signaling pathway, which regulates the migration and differentiation of postmitotic neurons during brain development. Mediates intracellular transduction of Reelin signaling following reelin (RELN)-binding to its receptor: acts by docking proteins through its phosphotyrosine residues and PID domain. The polypeptide is Disabled homolog 1 (Dab1) (Rattus norvegicus (Rat)).